An 860-amino-acid chain; its full sequence is Ras GTPase-activating-like protein gapA (860 aa).

Acidic residues predominate over residues 1–20 (MEGLEIEDEDVILLDEDDDS). A disordered region spans residues 1–48 (MEGLEIEDEDVILLDEDDDSSSSSTVNNSSSNIKNNGNTNNNIGNDDS). A compositionally biased stretch (low complexity) spans 21 to 46 (SSSSTVNNSSSNIKNNGNTNNNIGND). Positions 146–185 (AEIQELKRNMVAEIRRNHLLERDVNKLDKRIALLIKHRSN) form a coiled coil. The Ras-GAP domain maps to 269–515 (FLILSLFRLA…SIVRQYLEDL (247 aa)). Residues 663 to 732 (NNPQLSSNAE…TIALRDLRKH (70 aa)) are a coiled coil.

In terms of assembly, heterotetramer. Quaternary complex with activated rac1A, ctxA and ctxB in the absence of rgaA.

Part of signaling pathway that is required for completion of cytokinesis. gapA and rgaA control cortexillin localization to the cleavage furrow and hence may be involved in cleavage of the midbody in the final stage of cytokinesis by regulating the actin cytoskeleton. Forms a complex by linking activated rac1A to ctxA in the absence of rgaA. Assembly of this complex is necessary for the recruitment of cortexillin to the midzone of the dividing cell. The polypeptide is Ras GTPase-activating-like protein gapA (gapA) (Dictyostelium discoideum (Social amoeba)).